Consider the following 444-residue polypeptide: Elongation factor 1-alpha (444 aa).

One can recognise a tr-type G domain in the interval 15–236; the sequence is KPHINLAVVG…VLDTFQPPPR (222 aa). A G1 region spans residues 24-31; sequence GHVDNGKS. A GTP-binding site is contributed by 24–31; that stretch reads GHVDNGKS. Ser31 lines the Mg(2+) pocket. Residues 80–84 are G2; it reads GVTIE. The G3 stretch occupies residues 101-104; sequence DLPG. GTP-binding positions include 101-105 and 163-166; these read DLPGH and NKMD. The segment at 163–166 is G4; it reads NKMD. Residues 202–204 are G5; it reads SAV.

The protein belongs to the TRAFAC class translation factor GTPase superfamily. Classic translation factor GTPase family. EF-Tu/EF-1A subfamily.

Its subcellular location is the cytoplasm. It carries out the reaction GTP + H2O = GDP + phosphate + H(+). Functionally, GTP hydrolase that promotes the GTP-dependent binding of aminoacyl-tRNA to the A-site of ribosomes during protein biosynthesis. This is Elongation factor 1-alpha from Pyrobaculum arsenaticum (strain DSM 13514 / JCM 11321 / PZ6).